We begin with the raw amino-acid sequence, 307 residues long: Elongation factor Ts (307 aa).

The involved in Mg(2+) ion dislocation from EF-Tu stretch occupies residues 80-83 (TDFV).

This sequence belongs to the EF-Ts family.

Its subcellular location is the cytoplasm. Functionally, associates with the EF-Tu.GDP complex and induces the exchange of GDP to GTP. It remains bound to the aminoacyl-tRNA.EF-Tu.GTP complex up to the GTP hydrolysis stage on the ribosome. This chain is Elongation factor Ts, found in Xanthobacter autotrophicus (strain ATCC BAA-1158 / Py2).